The following is a 465-amino-acid chain: MGPTSLLSFFFTFLTLFHGFTAQQWPNECQLDQLNALEPSQIIKSEGGRIEVWDHHAPQLRCSGFAFERFVIEPQGLYLPTFLNAGKLTFVVHGHALMGKVTPGCAETFNDSPVFGQGQGQEQGQGQGQGQGQGFRDMHQKVEHLRSGDTIATPPGVAQWFYNNGNEPLILVAAADIANNLNQLDRNLRPFLLAGNNPQGQQWLQGRQQQKQNNIFNGFAPQILAQAFKISVETAQKLQNQQVNRGNIVKVQGQFGVIRPPLRQGQGGQQPQEEGNGLEETLCTMRCTENLDDPSSADVYKPSLGYISTLNSYNLPILRFLRLSALRGSIHNNAMVLPQWNVNANAALYVTKGKAHIQNVNDNGQRVFDQEISKGQLLVVPQGFAVVKRATSQQFQWIEFKSNDNAQINTLAGRTSVMRGLPLEVISNGYQISPQEARSVKFSTLETTLTQSSGPMGYGMPRVEA.

Residues Met1–Ala22 form the signal peptide. 2 disulfides stabilise this stretch: Cys29–Cys62 and Cys105–Cys283. 2 Cupin type-1 domains span residues Leu34–Gln236 and Glu289–Arg438. Thr108 bears the Phosphothreonine mark. Positions Ser112–Phe135 are disordered. Over residues Gln117 to Gln133 the composition is skewed to gly residues. At Tyr306 the chain carries Phosphotyrosine. Phosphoserine is present on residues Ser308 and Ser443.

Belongs to the 11S seed storage protein (globulins) family. Heterohexamer; each subunit is composed of an acidic and a basic chain derived from a single precursor and linked by a disulfide bond.

It is found in the rough endoplasmic reticulum. This is a seed storage protein. In Brassica napus (Rape), this protein is Cruciferin CRU4 (CRU4).